Reading from the N-terminus, the 309-residue chain is MEFKHISVLLEETIDSLNIKEDGVYVDCTLGGGGHSKEILKKLSHKGKLIGIDQDTSAIKAAKERLKDYENVIYVHNNFYNIDSILEELDIDKVDGIIMDLGVSSYQLDEASRGFSYMKDAPLDMRMNREENLSAYNVVNSYEEEELFKILKNYGEEKFSRKIARFIVEKRTENPIETTGELVEIIRKAIPAKFQREGHPAKRTFQAIRIEVNKELQILNKAIEDSVNRLNKDGRLSIITFHSLEDRIVKVKFKELEKPCTCPPSFPICVCGKEPQIKIITKKPIEPSKEEKEINSRSRSAKLRVCRKI.

Residues Gly-33–His-35, Asp-53, Phe-79, Asp-100, and Gln-107 each bind S-adenosyl-L-methionine.

It belongs to the methyltransferase superfamily. RsmH family.

The protein localises to the cytoplasm. The catalysed reaction is cytidine(1402) in 16S rRNA + S-adenosyl-L-methionine = N(4)-methylcytidine(1402) in 16S rRNA + S-adenosyl-L-homocysteine + H(+). Functionally, specifically methylates the N4 position of cytidine in position 1402 (C1402) of 16S rRNA. This Clostridium botulinum (strain Kyoto / Type A2) protein is Ribosomal RNA small subunit methyltransferase H.